The sequence spans 267 residues: 2-oxo-hept-4-ene-1,7-dioate hydratase (267 aa).

3 residues coordinate Mg(2+): E106, E108, and E139.

It belongs to the hydratase/decarboxylase family. Homodecamer. It depends on Mg(2+) as a cofactor.

It carries out the reaction (4Z)-2-oxohept-4-enedioate + H2O = (4S)-4-hydroxy-2-oxoheptanedioate. It participates in aromatic compound metabolism; 4-hydroxyphenylacetate degradation; pyruvate and succinate semialdehyde from 4-hydroxyphenylacetate: step 6/7. Transforms 2-oxo-hept-4-ene-1,7-dioate (OHED) into 4-hydroxy-2-oxoheptanedioate, a step in the 4-hydroxyphenylacetic acid (4-HPA) degradation pathway. This chain is 2-oxo-hept-4-ene-1,7-dioate hydratase, found in Escherichia coli.